A 181-amino-acid polypeptide reads, in one-letter code: MQAATLSFHPSAPPPQTSACHFSSKQPNQLKYSLFSYTCPILKRSLLSTQTLSRKSICKPPAVATGKYVREDYLVKKVSAKDIQELIKGERNVPLIIDFYATWCGPCILMAQELEMLAVEYESNALIVKVDADDEYEFARDMQVRGLPTLYFISPDPNKDAIRTEGLIPIQMMRDIINNDL.

The tract at residues 1–20 (MQAATLSFHPSAPPPQTSAC) is disordered. Residues 1–70 (MQAATLSFHP…PAVATGKYVR (70 aa)) constitute a chloroplast transit peptide. Residues 71 to 181 (EDYLVKKVSA…MMRDIINNDL (111 aa)) enclose the Thioredoxin domain. Residues Cys-104 and Cys-107 each act as nucleophile in the active site. An intrachain disulfide couples Cys-104 to Cys-107.

This sequence belongs to the thioredoxin family. Plant CITRX-type subfamily.

It localises to the plastid. Its subcellular location is the chloroplast. Functionally, probable thiol-disulfide oxidoreductase that may play a role in proper chloroplast development. The protein is Thioredoxin-like protein CITRX1, chloroplastic of Nicotiana benthamiana.